Consider the following 309-residue polypeptide: Ribonuclease Z (309 aa).

Zn(2+) is bound by residues histidine 63, histidine 65, aspartate 67, histidine 68, histidine 145, aspartate 216, and histidine 274. The active-site Proton acceptor is aspartate 67.

It belongs to the RNase Z family. Homodimer. The cofactor is Zn(2+).

It carries out the reaction Endonucleolytic cleavage of RNA, removing extra 3' nucleotides from tRNA precursor, generating 3' termini of tRNAs. A 3'-hydroxy group is left at the tRNA terminus and a 5'-phosphoryl group is left at the trailer molecule.. In terms of biological role, zinc phosphodiesterase, which displays some tRNA 3'-processing endonuclease activity. Probably involved in tRNA maturation, by removing a 3'-trailer from precursor tRNA. The chain is Ribonuclease Z from Streptococcus agalactiae serotype Ia (strain ATCC 27591 / A909 / CDC SS700).